We begin with the raw amino-acid sequence, 218 residues long: Capsid protein (218 aa).

The residue at position 1 (methionine 1) is an N-acetylmethionine; by host. Positions 1 to 28 are disordered; sequence MDKSESTSAGRNRRRRPRRGSRSAPSSA. Residues 11–21 show a composition bias toward basic residues; sequence RNRRRRPRRGS.

It belongs to the cucumovirus capsid protein family.

It is found in the virion. Capsid protein. Probably binds RNA and plays a role in packaging. The polypeptide is Capsid protein (Cucumis sativus (Cucumber)).